Reading from the N-terminus, the 232-residue chain is Large ribosomal subunit protein uL1 (232 aa).

Belongs to the universal ribosomal protein uL1 family. As to quaternary structure, part of the 50S ribosomal subunit.

Functionally, binds directly to 23S rRNA. The L1 stalk is quite mobile in the ribosome, and is involved in E site tRNA release. In terms of biological role, protein L1 is also a translational repressor protein, it controls the translation of the L11 operon by binding to its mRNA. The protein is Large ribosomal subunit protein uL1 of Parabacteroides distasonis (strain ATCC 8503 / DSM 20701 / CIP 104284 / JCM 5825 / NCTC 11152).